Consider the following 320-residue polypeptide: Cytochrome f (320 aa).

Positions 1 to 35 are cleaved as a signal peptide; the sequence is MQTRKTFSWIKEEITRSISVLLMIYIITWASISNA. 4 residues coordinate heme: Tyr-36, Cys-56, Cys-59, and His-60. Residues 286-306 traverse the membrane as a helical segment; it reads VQGLLFFLASVILAQIFLVLK.

This sequence belongs to the cytochrome f family. The 4 large subunits of the cytochrome b6-f complex are cytochrome b6, subunit IV (17 kDa polypeptide, petD), cytochrome f and the Rieske protein, while the 4 small subunits are PetG, PetL, PetM and PetN. The complex functions as a dimer. Heme serves as cofactor.

The protein resides in the plastid. Its subcellular location is the chloroplast thylakoid membrane. Component of the cytochrome b6-f complex, which mediates electron transfer between photosystem II (PSII) and photosystem I (PSI), cyclic electron flow around PSI, and state transitions. This is Cytochrome f from Manihot esculenta (Cassava).